The chain runs to 638 residues: 1-deoxy-D-xylulose-5-phosphate synthase (638 aa).

Residues His-74 and 115-117 (GHS) each bind thiamine diphosphate. Position 146 (Asp-146) interacts with Mg(2+). Thiamine diphosphate is bound by residues 147–148 (GA), Asn-175, Tyr-286, and Glu-366. Asn-175 provides a ligand contact to Mg(2+).

It belongs to the transketolase family. DXPS subfamily. As to quaternary structure, homodimer. Mg(2+) serves as cofactor. Requires thiamine diphosphate as cofactor.

It carries out the reaction D-glyceraldehyde 3-phosphate + pyruvate + H(+) = 1-deoxy-D-xylulose 5-phosphate + CO2. It functions in the pathway metabolic intermediate biosynthesis; 1-deoxy-D-xylulose 5-phosphate biosynthesis; 1-deoxy-D-xylulose 5-phosphate from D-glyceraldehyde 3-phosphate and pyruvate: step 1/1. Catalyzes the acyloin condensation reaction between C atoms 2 and 3 of pyruvate and glyceraldehyde 3-phosphate to yield 1-deoxy-D-xylulose-5-phosphate (DXP). In Syntrophomonas wolfei subsp. wolfei (strain DSM 2245B / Goettingen), this protein is 1-deoxy-D-xylulose-5-phosphate synthase.